A 463-amino-acid polypeptide reads, in one-letter code: RuvB-like 2 (463 aa).

At Ala2 the chain carries N-acetylalanine. A Glycyl lysine isopeptide (Lys-Gly) (interchain with G-Cter in SUMO2) cross-link involves residue Lys9. Residue 77–84 participates in ATP binding; the sequence is GQPGTGKT. Ser437 bears the Phosphoserine mark. Residues Lys444 and Lys456 each participate in a glycyl lysine isopeptide (Lys-Gly) (interchain with G-Cter in SUMO2) cross-link.

This sequence belongs to the RuvB family. In terms of assembly, forms homohexameric rings. Can form a dodecamer with RUVBL1 made of two stacked hexameric rings; however, even though RUVBL1 and RUVBL2 are present in equimolar ratio, the oligomeric status of each hexamer is not known. Oligomerization may regulate binding to nucleic acids and conversely, binding to nucleic acids may affect the dodecameric assembly. Interaction of the complex with DHX34 results in conformational changes of the N-terminus of the RUVBL2 subunits, resulting in loss of nucleotide binding ability and ATP hydrolysis of the complex. Interacts with the transcriptional activation domain of MYC. Interacts with ATF2. Component of the RNA polymerase II holoenzyme complex. May also act to bridge the LEF1/TCF1-CTNNB1 complex and TBP. Component of the NuA4 histone acetyltransferase complex which contains the catalytic subunit KAT5/TIP60 and the subunits EP400, TRRAP/PAF400, BRD8/SMAP, EPC1, DMAP1/DNMAP1, RUVBL1/TIP49, RUVBL2, ING3, actin, ACTL6A/BAF53A, MORF4L1/MRG15, MORF4L2/MRGX, MRGBP, YEATS4/GAS41, VPS72/YL1 and MEAF6. The NuA4 complex interacts with MYC and the adenovirus E1A protein. RUVBL2 interacts with EP400. Component of a NuA4-related complex which contains EP400, TRRAP/PAF400, SRCAP, BRD8/SMAP, EPC1, DMAP1/DNMAP1, RUVBL1/TIP49, RUVBL2, actin, ACTL6A/BAF53A, VPS72 and YEATS4/GAS41. Interacts with NPAT. Component of the chromatin-remodeling INO80 complex; specifically part of a complex module associated with the helicase ATP-binding and the helicase C-terminal domain of INO80. Component of some MLL1/MLL complex, at least composed of the core components KMT2A/MLL1, ASH2L, HCFC1/HCF1, WDR5 and RBBP5, as well as the facultative components BACC1, CHD8, E2F6, HSP70, INO80C, KANSL1, LAS1L, MAX, MCRS1, MGA, MYST1/MOF, PELP1, PHF20, PRP31, RING2, RUVB1/TIP49A, RUVB2/TIP49B, SENP3, TAF1, TAF4, TAF6, TAF7, TAF9 and TEX10. Interacts with IGHMBP2. Interacts with TELO2. Interacts with HINT1. Component of a SWR1-like complex. Component of the R2TP complex composed at least of RUVBL1, RUVBL2, RPAP3 and PIHD1. Component of the PAQosome complex which is responsible for the biogenesis of several protein complexes and which consists of R2TP complex members RUVBL1, RUVBL2, RPAP3 and PIH1D1, URI complex members PFDN2, PFDN6, PDRG1, UXT and URI1 as well as ASDURF, POLR2E and DNAAF10/WDR92. Interacts with ITFG1. Interacts with ZMYND10. Interacts with WAC; WAC positively regulates MTOR activity by promoting the assembly of the TTT complex composed of TELO2, TTI1 and TTI2 and the RUVBL complex composed of RUVBL1 and RUVBL2 into the TTT-RUVBL complex which leads to the dimerization of the mTORC1 complex and its subsequent activation. Forms a complex with APPL1 and APPL2. Interacts with ZNHIT2 (via HIT-type zinc finger) in the presence of ATP or ADP; shows a stronger interaction in the presence of ADP. The RUVBL1/RUVBL2 complex interacts with ZNHIT1 (via HIT-type zinc finger), ZNHIT3 (via HIT-type zinc finger), ZNHIT6 (via HIT-type zinc finger) and DDX59/ZNHIT5 (via HIT-type zinc finger) in the presence of ADP. Interacts with NOPCHAP1; the interaction is direct and disrupted upon ATP binding. Interacts with SMG1.

The protein resides in the nucleus matrix. It is found in the nucleus. It localises to the nucleoplasm. Its subcellular location is the cytoplasm. The protein localises to the membrane. The protein resides in the dynein axonemal particle. The enzyme catalyses ATP + H2O = ADP + phosphate + H(+). Functionally, possesses single-stranded DNA-stimulated ATPase and ATP-dependent DNA helicase (5' to 3') activity; hexamerization is thought to be critical for ATP hydrolysis and adjacent subunits in the ring-like structure contribute to the ATPase activity. Component of the NuA4 histone acetyltransferase complex which is involved in transcriptional activation of select genes principally by acetylation of nucleosomal histones H4 and H2A. This modification may both alter nucleosome-DNA interactions and promote interaction of the modified histones with other proteins which positively regulate transcription. This complex may be required for the activation of transcriptional programs associated with oncogene and proto-oncogene mediated growth induction, tumor suppressor mediated growth arrest and replicative senescence, apoptosis, and DNA repair. The NuA4 complex ATPase and helicase activities seem to be, at least in part, contributed by the association of RUVBL1 and RUVBL2 with EP400. NuA4 may also play a direct role in DNA repair when recruited to sites of DNA damage. Component of a SWR1-like complex that specifically mediates the removal of histone H2A.Z/H2AZ1 from the nucleosome. Proposed core component of the chromatin remodeling INO80 complex which exhibits DNA- and nucleosome-activated ATPase activity and catalyzes ATP-dependent nucleosome sliding. Plays an essential role in oncogenic transformation by MYC and also modulates transcriptional activation by the LEF1/TCF1-CTNNB1 complex. May also inhibit the transcriptional activity of ATF2. Involved in the endoplasmic reticulum (ER)-associated degradation (ERAD) pathway where it negatively regulates expression of ER stress response genes. May play a role in regulating the composition of the U5 snRNP complex. The chain is RuvB-like 2 (RUVBL2) from Bos taurus (Bovine).